Reading from the N-terminus, the 216-residue chain is 3-isopropylmalate dehydratase small subunit (216 aa).

Belongs to the LeuD family. LeuD type 1 subfamily. In terms of assembly, heterodimer of LeuC and LeuD.

It catalyses the reaction (2R,3S)-3-isopropylmalate = (2S)-2-isopropylmalate. The protein operates within amino-acid biosynthesis; L-leucine biosynthesis; L-leucine from 3-methyl-2-oxobutanoate: step 2/4. In terms of biological role, catalyzes the isomerization between 2-isopropylmalate and 3-isopropylmalate, via the formation of 2-isopropylmaleate. The sequence is that of 3-isopropylmalate dehydratase small subunit from Psychrobacter arcticus (strain DSM 17307 / VKM B-2377 / 273-4).